Here is a 77-residue protein sequence, read N- to C-terminus: Metallothionein-like protein type 2 (77 aa).

The protein belongs to the metallothionein superfamily. Type 15 family. In terms of tissue distribution, expressed in the left, stem and flower, at very low levels in roots and is not detectable in mesophyll protoplasts.

Metallothioneins have a high content of cysteine residues that bind various heavy metals. This chain is Metallothionein-like protein type 2 (MTI), found in Vicia faba (Broad bean).